Here is a 438-residue protein sequence, read N- to C-terminus: Putative metabolite transport protein HI_0281 (438 aa).

Topologically, residues 1–17 are cytoplasmic; that stretch reads MSTQLRNNPMKVALASM. A helical transmembrane segment spans residues 18–38; the sequence is VGTAIEFFDYYIYAAAAVLVF. Residues 39 to 52 lie on the Periplasmic side of the membrane; that stretch reads NTQFFHSDDPLSND. The helical transmembrane segment at 53-73 threads the bilayer; sequence LLSLSTLALAFFARPIGSALF. Topologically, residues 74-85 are cytoplasmic; sequence GHFGDKIGRKKT. The helical transmembrane segment at 86-106 threads the bilayer; the sequence is LVASLVLMGGSTVVIGLLPNY. The Periplasmic segment spans residues 107 to 115; the sequence is AQIGIWAPI. A helical transmembrane segment spans residues 116-136; sequence LLCVCRVGQGIGLGGEWGGAA. At 137–156 the chain is on the cytoplasmic side; that stretch reads LVATENAPEGKRAWYGTFPQ. Residues 157–177 form a helical membrane-spanning segment; the sequence is LGAPIGLFVANGTFFLVSYLL. The Periplasmic portion of the chain corresponds to 178–181; it reads GHNA. The chain crosses the membrane as a helical span at residues 182–202; that stretch reads LVEWAWRIPFVSSILLVAVGL. Residues 203–239 lie on the Cytoplasmic side of the membrane; sequence YVRLTLHESHVFVEAEQKGKKLNAPVSVVFTKHLKPM. Residues 240-260 traverse the membrane as a helical segment; that stretch reads VIGTFIMVATYSLFYIMTAFA. The Periplasmic segment spans residues 261–286; the sequence is QAYSRTAPKLSEAGYALGLGIPANTF. The helical transmembrane segment at 287–307 threads the bilayer; that stretch reads TGLLLISAIVFGIFISISGFY. The Cytoplasmic portion of the chain corresponds to 308-314; it reads ADKIGRR. A helical membrane pass occupies residues 315–336; it reads KWLIWVTIAIGVLGLAMPLFLE. The Periplasmic portion of the chain corresponds to 337 to 342; it reads NGTPVS. The helical transmembrane segment at 343 to 363 threads the bilayer; it reads VFAFLVIGMAIMGMTFGPMAA. Over 364–377 the chain is Cytoplasmic; it reads LLPELFPTEVRYSG. Residues 378–398 traverse the membrane as a helical segment; it reads ASLAYNLASIIGATIAAMISL. The Periplasmic portion of the chain corresponds to 399 to 405; the sequence is KINASFG. A helical transmembrane segment spans residues 406-426; sequence VMGVGIYLAINALMTFLALLA. Topologically, residues 427-438 are cytoplasmic; it reads SKETKNVDLTEI.

The protein belongs to the major facilitator superfamily. Sugar transporter (TC 2.A.1.1) family.

The protein resides in the cell inner membrane. This Haemophilus influenzae (strain ATCC 51907 / DSM 11121 / KW20 / Rd) protein is Putative metabolite transport protein HI_0281.